Consider the following 680-residue polypeptide: Zinc finger protein 263 (680 aa).

Lysine 19 participates in a covalent cross-link: Glycyl lysine isopeptide (Lys-Gly) (interchain with G-Cter in SUMO2). The SCAN box domain occupies 43-125 (HLRFRRFRFQ…TLVERMQKEL (83 aa)). Residues 147-191 (LPLETAGESPSFKLEPMETERSPGPRLQELLDPSPQRDSQAVKER) are disordered. Lysine 159 is covalently cross-linked (Glycyl lysine isopeptide (Lys-Gly) (interchain with G-Cter in SUMO2)). A phosphoserine mark is found at serine 168 and serine 180. Residues lysine 286, lysine 300, and lysine 376 each participate in a glycyl lysine isopeptide (Lys-Gly) (interchain with G-Cter in SUMO2) cross-link. C2H2-type zinc fingers lie at residues 378–400 (HLCA…QRIH), 434–456 (HKCL…QRTH), 462–484 (FQCN…QRTH), 490–512 (YKCP…QRIH), and 518–540 (YRCS…ERTH). Glycyl lysine isopeptide (Lys-Gly) (interchain with G-Cter in SUMO2) cross-links involve residues lysine 570 and lysine 579. C2H2-type zinc fingers lie at residues 572–594 (FECS…QRTH), 600–622 (YKCI…QRIH), 628–650 (YTCH…LRTH), and 656–678 (YKCS…QRTH).

It belongs to the krueppel C2H2-type zinc-finger protein family. In terms of assembly, interacts with a number of proteins involved in chromatin modification and transcriptional corepression including DNMT1, DNMT3A, HDAC2, PHF8, TRIM28/KAP1, SETDB1, EZH2, UHRF1, CBX3/HP1-gamma, and CBX5/HP1-alpha; recruits these proteins to the SIX3 promoter region, leading to SIX3 transcriptional repression. Interacts with MAPK3/ERK1 and MAPK1/ERK2. In terms of processing, ubiquitinated, leading to proteasomal degradation. In terms of tissue distribution, expressed in Purkinje cells in the brain (at protein level).

Its subcellular location is the nucleus. Transcription factor that binds to the consensus sequence 5'-TCCTCCC-3' and acts as a transcriptional repressor. Binds to the promoter region of SIX3 and recruits other proteins involved in chromatin modification and transcriptional corepression, resulting in methylation of the promoter and transcriptional repression. Acts as a transcriptional repressor of HS3ST1 and HS3ST3A1 via binding to gene promoter regions. The sequence is that of Zinc finger protein 263 from Mus musculus (Mouse).